A 116-amino-acid chain; its full sequence is T cell receptor alpha variable 38-1 (116 aa).

The first 21 residues, Met-1 to Ala-21, serve as a signal peptide directing secretion. The region spanning Gln-22–Lys-116 is the Ig-like domain. Cysteines 43 and 112 form a disulfide. Asn-78 carries N-linked (GlcNAc...) asparagine glycosylation.

As to quaternary structure, alpha-beta TR is a heterodimer composed of an alpha and beta chain; disulfide-linked. The alpha-beta TR is associated with the transmembrane signaling CD3 coreceptor proteins to form the TR-CD3 (TcR or TCR). The assembly of alpha-beta TR heterodimers with CD3 occurs in the endoplasmic reticulum where a single alpha-beta TR heterodimer associates with one CD3D-CD3E heterodimer, one CD3G-CD3E heterodimer and one CD247 homodimer forming a stable octameric structure. CD3D-CD3E and CD3G-CD3E heterodimers preferentially associate with TR alpha and TR beta chains, respectively. The association of the CD247 homodimer is the last step of TcR assembly in the endoplasmic reticulum and is required for transport to the cell surface.

Its subcellular location is the cell membrane. V region of the variable domain of T cell receptor (TR) alpha chain that participates in the antigen recognition. Alpha-beta T cell receptors are antigen specific receptors which are essential to the immune response and are present on the cell surface of T lymphocytes. Recognize peptide-major histocompatibility (MH) (pMH) complexes that are displayed by antigen presenting cells (APC), a prerequisite for efficient T cell adaptive immunity against pathogens. Binding of alpha-beta TR to pMH complex initiates TR-CD3 clustering on the cell surface and intracellular activation of LCK that phosphorylates the ITAM motifs of CD3G, CD3D, CD3E and CD247 enabling the recruitment of ZAP70. In turn ZAP70 phosphorylates LAT, which recruits numerous signaling molecules to form the LAT signalosome. The LAT signalosome propagates signal branching to three major signaling pathways, the calcium, the mitogen-activated protein kinase (MAPK) kinase and the nuclear factor NF-kappa-B (NF-kB) pathways, leading to the mobilization of transcription factors that are critical for gene expression and essential for T cell growth and differentiation. The T cell repertoire is generated in the thymus, by V-(D)-J rearrangement. This repertoire is then shaped by intrathymic selection events to generate a peripheral T cell pool of self-MH restricted, non-autoaggressive T cells. Post-thymic interaction of alpha-beta TR with the pMH complexes shapes TR structural and functional avidity. This chain is T cell receptor alpha variable 38-1, found in Homo sapiens (Human).